The sequence spans 263 residues: MENKNVIQKMREKTPLIHCITNYVTINDCANILLSFGASPAMCEAYDEVYDFVSISSALYINLGTLTKEQETAAVLASISAKNHNVPVVIDPVGCPAIKRKVEVINRIAEVGRIDIIKGNIGEIKFLAGMDSETRGVDSLDNGENALDACTQLAKKYNCIVAATGQKDFVSDGKRGSVIKNGTEMLTKVTGAGCMLGALCAATCANFEDKLVSTTAAILSMNIAGEKAYEKAQLPGSFRIALIDNIYMISDKEIWERGNVEWK.

Residue Met-42 participates in substrate binding. Residues Lys-118 and Thr-164 each coordinate ATP. Position 191 (Gly-191) interacts with substrate.

This sequence belongs to the Thz kinase family. It depends on Mg(2+) as a cofactor.

The catalysed reaction is 5-(2-hydroxyethyl)-4-methylthiazole + ATP = 4-methyl-5-(2-phosphooxyethyl)-thiazole + ADP + H(+). Its pathway is cofactor biosynthesis; thiamine diphosphate biosynthesis; 4-methyl-5-(2-phosphoethyl)-thiazole from 5-(2-hydroxyethyl)-4-methylthiazole: step 1/1. Catalyzes the phosphorylation of the hydroxyl group of 4-methyl-5-beta-hydroxyethylthiazole (THZ). This chain is Hydroxyethylthiazole kinase 1, found in Clostridium botulinum (strain Kyoto / Type A2).